Here is a 516-residue protein sequence, read N- to C-terminus: Circadian clock oscillator protein KaiC (516 aa).

2 consecutive KaiC domains span residues 1–244 and 258–516; these read MNQP…INIF and ARIS…TLPE. Gly46, Thr47, Gly48, Lys49, Thr50, Leu51, Ser86, Lys221, Leu222, Arg223, Thr225, His227, Thr237, Thr287, Gly288, Thr289, Gly290, Lys291, Thr292, and Leu293 together coordinate ATP. Thr50 is a binding site for Mg(2+). Thr292 contributes to the Mg(2+) binding site. Glu315 provides a ligand contact to Mg(2+). Trp328 provides a ligand contact to ATP. At Ser428 the chain carries Phosphoserine; by autocatalysis. Thr429 bears the Phosphothreonine; by autocatalysis mark. ATP-binding residues include Arg448, Lys454, Met455, Arg456, Ser458, His460, and Lys462.

It belongs to the KaiC family. As to quaternary structure, homohexamer; hexamerization is dependent on ATP-binding. The KaiABC complex composition changes during the circadian cycle to control KaiC phosphorylation. Complexes KaiC(6), KaiA(2-4):KaiC(6), KaiB(6):KaiC(6) and KaiC(6):KaiB(6):KaiA(12) are among the most important forms, many form cooperatively. KaiC interacts with SasA, activating its autokinase function and leading to RpaA activation. Requires Mg(2+) as cofactor. Post-translationally, phosphorylated on serine and threonine residues by autocatalysis. Has a 4 step phosphorylation cycle; the autokinase acts first on Thr-429, then Ser-428. When Ser-428 is modified KaiC switches to an autophosphatase mode, acting first on phospho-Thr-429 then phospho-Ser-428.

The catalysed reaction is L-seryl-[protein] + ATP = O-phospho-L-seryl-[protein] + ADP + H(+). It carries out the reaction L-threonyl-[protein] + ATP = O-phospho-L-threonyl-[protein] + ADP + H(+). The enzyme catalyses ATP + H2O = ADP + phosphate + H(+). The interaction with KaiA enhances its phosphorylation status, while the interaction with KaiB decreases it. In terms of biological role, central component of the KaiABC oscillator complex, which constitutes the main circadian regulator in cyanobacteria. Complex composition changes during the circadian cycle to control KaiC phosphorylation. KaiA stimulates KaiC autophosphorylation, while KaiB sequesters KaiA, leading to KaiC autodephosphorylation. Clock output pathways impact the RpaA transcriptional regulator. KaiC enhances the autophosphorylation activity of SasA, which then transfers its phosphate group to RpaA to activate it. KaiB and KaiC together enhance the phospho-RpaA dephosphatase activity of CikA. Has a weak, temperature-independent ATPase activity; ATPase activity defines the circadian period. The phosphorylation state of KaiC modulates its ATPase activity and effects KaiB binding. This Picosynechococcus sp. (strain ATCC 27264 / PCC 7002 / PR-6) (Agmenellum quadruplicatum) protein is Circadian clock oscillator protein KaiC.